The chain runs to 295 residues: Aspartate carbamoyltransferase catalytic subunit (295 aa).

Residues arginine 54 and threonine 55 each coordinate carbamoyl phosphate. L-aspartate is bound at residue lysine 82. Carbamoyl phosphate is bound by residues arginine 104, histidine 132, and glutamine 135. The L-aspartate site is built by arginine 165 and arginine 218. Carbamoyl phosphate-binding residues include glycine 257 and proline 258.

The protein belongs to the aspartate/ornithine carbamoyltransferase superfamily. ATCase family. Heterododecamer (2C3:3R2) of six catalytic PyrB chains organized as two trimers (C3), and six regulatory PyrI chains organized as three dimers (R2).

It catalyses the reaction carbamoyl phosphate + L-aspartate = N-carbamoyl-L-aspartate + phosphate + H(+). It participates in pyrimidine metabolism; UMP biosynthesis via de novo pathway; (S)-dihydroorotate from bicarbonate: step 2/3. In terms of biological role, catalyzes the condensation of carbamoyl phosphate and aspartate to form carbamoyl aspartate and inorganic phosphate, the committed step in the de novo pyrimidine nucleotide biosynthesis pathway. This chain is Aspartate carbamoyltransferase catalytic subunit, found in Wolbachia pipientis wMel.